The chain runs to 2168 residues: Bromodomain adjacent to zinc finger domain protein 2B (2168 aa).

Disordered regions lie at residues 1–29 (MESG…ASVV), 140–348 (FAPP…KQPQ), 409–428 (LKAG…SELR), 459–479 (SNPK…ENNH), 528–698 (STPF…LHIA), 719–740 (GTSS…RRVT), 841–872 (MEGR…PPNV), and 1021–1043 (RKKA…LNKE). Positions 8–29 (PSSAASSTTPTSSSTPSVASVV) are enriched in low complexity. Composition is skewed to polar residues over residues 146-163 (NHDS…SNRN) and 171-193 (GSIN…STTA). Composition is skewed to low complexity over residues 194–204 (SSSMGQTKSTS) and 240–263 (ESSS…ISSS). Positions 264 to 291 (DSDDLEEDEEEEDQSIEESEDDDSDSES) are enriched in acidic residues. Positions 307–325 (SDPKADGQKATEKAQEKRI) are enriched in basic and acidic residues. A compositionally biased stretch (low complexity) spans 335-348 (SQTHSFQSQQKQPQ). Polar residues-rich tracts occupy residues 461 to 479 (PKAT…ENNH) and 528 to 551 (STPF…QTPV). Positions 592–605 (RGTDSDIPSSKDSE) are enriched in basic and acidic residues. Residues 606 to 663 (DSNEDEEEDDEEEDEEDDEDDESDDSQSESDSNSESDTEGSEEEDDDDKDQDESDSDT) are compositionally biased toward acidic residues. The segment covering 670–693 (MKLNKTTSSVKSPSMSLTGHSTPR) has biased composition (polar residues). Residues 720 to 732 (TSSSTLTSSPHSG) show a composition bias toward low complexity. The MBD domain occupies 739–810 (VTDERELRIP…DNFSFSAKIR (72 aa)). The segment covering 841-861 (MEGRRGRPPNPDRQRAREESR) has biased composition (basic and acidic residues). The stretch at 883–1061 (AKLLRKLQAQ…ELEMAKELKK (179 aa)) forms a coiled coil. In terms of domain architecture, DDT spans 1087–1152 (GSTFSDCLMV…LSAAVCDPGL (66 aa)). Positions 1265 to 1341 (KRDTSGGIDL…CEDEDEGDQA (77 aa)) are disordered. Residues 1297-1321 (SDYDDDDDDDSDDQGDEDDEDEEDK) are compositionally biased toward acidic residues. Residues 1322–1331 (EDKKGKKTDI) are compositionally biased toward basic and acidic residues. The stretch at 1334–1375 (DEDEGDQAASVEELEKQIEKLSKQQSQYRRKLFDASHSLRSV) forms a coiled coil. Lys-1425 is covalently cross-linked (Glycyl lysine isopeptide (Lys-Gly) (interchain with G-Cter in SUMO2)). Lys-1462 carries the post-translational modification N6-acetyllysine. Phosphoserine occurs at positions 1465 and 1467. Residues 1503-1533 (SGKHSLGSVQSTATQSNVEKADSNNLFNTGS) show a composition bias toward polar residues. Disordered stretches follow at residues 1503 to 1542 (SGKH…FYSP), 1582 to 1607 (SLVT…SSAQ), and 1670 to 1694 (TSNV…AQPA). Residues 1588-1600 (SQPPSKSPSPTPA) are compositionally biased toward pro residues. Residues 1670-1692 (TSNVASSKSESPVPQNEKATSAQ) are compositionally biased toward polar residues. Ser-1680 is subject to Phosphoserine. Residues 1931–1981 (KVYCQICRKGDNEELLLLCDGCDKGCHTYCHRPKITTIPDGDWFCPACIAK) form a PHD-type zinc finger. Residues 1998-2040 (KTNESKKGKKVTLTGDTEDEDSASTSSSLKRGNKDLKKRKMEE) form a disordered region. Thr-2014 bears the Phosphothreonine mark. At Ser-2019 the chain carries Phosphoserine. The span at 2029-2040 (GNKDLKKRKMEE) shows a compositional bias: basic and acidic residues. In terms of domain architecture, Bromo spans 2060–2164 (RDDSKDLALC…KYFEKKWTDT (105 aa)).

The protein belongs to the WAL family. As to quaternary structure, component of the BRF-1 ISWI chromatin remodeling complex, at least composed of SMARCA1 and BAZ2B, which regulates the spacing of histone octamers on the DNA template to facilitate access to DNA. Within the BRF-1 ISWI chromatin remodeling complex interacts with SMARCA1; the interaction is direct. Component of the BRF-5 ISWI chromatin remodeling complex, at least composed of SMARCA5/SNF2H and BAZ2B, which regulates the spacing of histone octamers on the DNA template to facilitate access to DNA. Within the BRF-5 ISWI chromatin remodeling complex interacts with SMARCA5/SNF2H; the interaction is direct. Interacts with acetylated lysine residues on histone H1.4, H2A, H2B, H3 and H4 (in vitro). Interacts with EHMT1. Expressed at varying levels in several tissues, whereas a smaller transcript was expressed specifically in testis.

The protein resides in the nucleus. Its function is as follows. Regulatory subunit of the ATP-dependent BRF-1 and BRF-5 ISWI chromatin remodeling complexes, which form ordered nucleosome arrays on chromatin and facilitate access to DNA during DNA-templated processes such as DNA replication, transcription, and repair. Both complexes regulate the spacing of nucleosomes along the chromatin and have the ability to slide mononucleosomes to the center of a DNA template. The BRF-1 ISWI chromatin remodeling complex has a lower ATP hydrolysis rate than the BRF-5 ISWI chromatin remodeling complex. Chromatin reader protein, which may play a role in transcriptional regulation via interaction with ISWI. Involved in positively modulating the rate of age-related behavioral deterioration. Represses the expression of mitochondrial function-related genes, perhaps by occupying their promoter regions, working in concert with histone methyltransferase EHMT1. The sequence is that of Bromodomain adjacent to zinc finger domain protein 2B (BAZ2B) from Homo sapiens (Human).